The following is a 429-amino-acid chain: 3-phosphoshikimate 1-carboxyvinyltransferase (429 aa).

Residues K23, S24, and R28 each coordinate 3-phosphoshikimate. A phosphoenolpyruvate-binding site is contributed by K23. Positions 97 and 125 each coordinate phosphoenolpyruvate. Positions 170, 171, 172, 198, 314, 338, and 342 each coordinate 3-phosphoshikimate. Q172 serves as a coordination point for phosphoenolpyruvate. D314 functions as the Proton acceptor in the catalytic mechanism. The phosphoenolpyruvate site is built by R346, R388, and K413.

This sequence belongs to the EPSP synthase family. As to quaternary structure, monomer.

The protein localises to the cytoplasm. It carries out the reaction 3-phosphoshikimate + phosphoenolpyruvate = 5-O-(1-carboxyvinyl)-3-phosphoshikimate + phosphate. Its pathway is metabolic intermediate biosynthesis; chorismate biosynthesis; chorismate from D-erythrose 4-phosphate and phosphoenolpyruvate: step 6/7. In terms of biological role, catalyzes the transfer of the enolpyruvyl moiety of phosphoenolpyruvate (PEP) to the 5-hydroxyl of shikimate-3-phosphate (S3P) to produce enolpyruvyl shikimate-3-phosphate and inorganic phosphate. The chain is 3-phosphoshikimate 1-carboxyvinyltransferase from Pectobacterium atrosepticum (strain SCRI 1043 / ATCC BAA-672) (Erwinia carotovora subsp. atroseptica).